A 585-amino-acid chain; its full sequence is Staphyloferrin A synthase (585 aa).

It belongs to the IucA/IucC family.

The catalysed reaction is N(5)-[(S)-citryl]-D-ornithine + citrate + ATP = staphyloferrin A + AMP + diphosphate + H(+). It functions in the pathway siderophore biosynthesis. Functionally, involved in the biosynthesis of the siderophore staphyloferrin A. Catalyzes the ATP-dependent condensation of a citryl-D-ornithine intermediate, produced by SfnaD, and citrate to form staphyloferrin A. In Staphylococcus aureus (strain NCTC 8325 / PS 47), this protein is Staphyloferrin A synthase.